Here is a 49-residue protein sequence, read N- to C-terminus: Large ribosomal subunit protein bL33 (49 aa).

Belongs to the bacterial ribosomal protein bL33 family.

This Heliobacterium modesticaldum (strain ATCC 51547 / Ice1) protein is Large ribosomal subunit protein bL33.